The primary structure comprises 655 residues: Alpha-amylase (655 aa).

E123 functions as the Nucleophile in the catalytic mechanism. The Proton donor role is filled by D214.

It belongs to the glycosyl hydrolase 57 family.

The enzyme catalyses Endohydrolysis of (1-&gt;4)-alpha-D-glucosidic linkages in polysaccharides containing three or more (1-&gt;4)-alpha-linked D-glucose units.. The polypeptide is Alpha-amylase (amyA) (Pyrococcus abyssi (strain GE5 / Orsay)).